The sequence spans 376 residues: Aspartate-semialdehyde dehydrogenase (376 aa).

NADP(+)-binding positions include 11–14 (RGMV), 38–39 (TS), and Gln74. Arg103 is a binding site for phosphate. Catalysis depends on Cys136, which acts as the Acyl-thioester intermediate. Gln163 is a binding site for substrate. Residues 166-167 (SG) and Pro194 contribute to the NADP(+) site. Glu242 provides a ligand contact to substrate. Lys245 is a binding site for phosphate. Arg273 contacts substrate. Catalysis depends on His280, which acts as the Proton acceptor. Residue Gln356 participates in NADP(+) binding.

It belongs to the aspartate-semialdehyde dehydrogenase family. Homodimer.

The catalysed reaction is L-aspartate 4-semialdehyde + phosphate + NADP(+) = 4-phospho-L-aspartate + NADPH + H(+). It functions in the pathway amino-acid biosynthesis; L-lysine biosynthesis via DAP pathway; (S)-tetrahydrodipicolinate from L-aspartate: step 2/4. The protein operates within amino-acid biosynthesis; L-methionine biosynthesis via de novo pathway; L-homoserine from L-aspartate: step 2/3. It participates in amino-acid biosynthesis; L-threonine biosynthesis; L-threonine from L-aspartate: step 2/5. Functionally, catalyzes the NADPH-dependent formation of L-aspartate-semialdehyde (L-ASA) by the reductive dephosphorylation of L-aspartyl-4-phosphate. This Bordetella pertussis (strain Tohama I / ATCC BAA-589 / NCTC 13251) protein is Aspartate-semialdehyde dehydrogenase.